The chain runs to 72 residues: Prokaryotic ubiquitin-like protein Pup (72 aa).

Residues 1–10 (MATKDTGGGQ) are compositionally biased toward gly residues. A disordered region spans residues 1–45 (MATKDTGGGQQKATRSTEEVEEQAQDAQASEDLKERQEKLSDDVD). The stretch at 10-60 (QQKATRSTEEVEEQAQDAQASEDLKERQEKLSDDVDSVLDEIDDVLEENAE) forms a coiled coil. The interval 28–66 (QASEDLKERQEKLSDDVDSVLDEIDDVLEENAEDFVRSF) is ARC ATPase binding. Residues 31-42 (EDLKERQEKLSD) show a composition bias toward basic and acidic residues. Glu72 is covalently cross-linked (Isoglutamyl lysine isopeptide (Glu-Lys) (interchain with K-? in acceptor proteins)).

The protein belongs to the prokaryotic ubiquitin-like protein family. Strongly interacts with the proteasome-associated ATPase ARC through a hydrophobic interface; the interacting region of Pup lies in its C-terminal half. There is one Pup binding site per ARC hexamer ring.

The protein operates within protein degradation; proteasomal Pup-dependent pathway. Protein modifier that is covalently attached to lysine residues of substrate proteins, thereby targeting them for proteasomal degradation. The tagging system is termed pupylation. This Streptomyces coelicolor (strain ATCC BAA-471 / A3(2) / M145) protein is Prokaryotic ubiquitin-like protein Pup.